Consider the following 692-residue polypeptide: E3 ubiquitin-protein ligase brl1 (692 aa).

A coiled-coil region spans residues 302–370 (SNEEKIESIN…RNERDSLVAK (69 aa)). The segment at 639–679 (CSVCNFSNWKSKLIPNCGHAFCSNCMEPFYEHKTSTCPQCE) adopts an RING-type zinc-finger fold.

Belongs to the BRE1 family. Component of the histone H2B ubiquitin ligase complex (HULC) composed of at least brl1, brl2, rhp6 and shf1.

Its subcellular location is the nucleus. It catalyses the reaction S-ubiquitinyl-[E2 ubiquitin-conjugating enzyme]-L-cysteine + [acceptor protein]-L-lysine = [E2 ubiquitin-conjugating enzyme]-L-cysteine + N(6)-ubiquitinyl-[acceptor protein]-L-lysine.. Its pathway is protein modification; protein ubiquitination. E3 ubiquitin-protein ligase which belongs to the histone H2B ubiquitin ligase complex (HULC) which mediates monoubiquitination of histone H2B to form H2BK123ub1. H2BK123ub1 gives a specific tag for epigenetic transcriptional activation and is also a prerequisite for H3K4me and H3K79me formation. This Schizosaccharomyces pombe (strain 972 / ATCC 24843) (Fission yeast) protein is E3 ubiquitin-protein ligase brl1 (brl1).